The primary structure comprises 587 residues: Thioredoxin domain-containing protein 3 (587 aa).

The region spanning 2–119 (ASKKREVQLQ…VIALIDEEKK (118 aa)) is the Thioredoxin domain. Cysteine 39 and cysteine 42 are disulfide-bonded. NDK regions lie at residues 157–255 (MAVI…PLEE), 313–453 (VQRT…STLA), and 454–587 (LIKP…NFEN).

In the C-terminal section; belongs to the NDK family. Monomer. In terms of tissue distribution, testis-specific.

Its subcellular location is the cytoplasm. Functionally, probably required during the final stages of sperm tail maturation in the testis and/or epididymis, where extensive disulfide bonding of fibrous sheath (FS) proteins occurs. In vitro, it has neither nucleoside diphosphate kinase (NDPK) activity nor reducing activity on disulfide bonds. Exhibits a 3'-5' exonuclease activity with a preference for single-stranded DNA, suggesting roles in DNA proofreading and repair. This chain is Thioredoxin domain-containing protein 3 (Nme8), found in Rattus norvegicus (Rat).